The sequence spans 189 residues: UPF0340 protein EF_1967 (189 aa).

The protein belongs to the UPF0340 family.

This chain is UPF0340 protein EF_1967, found in Enterococcus faecalis (strain ATCC 700802 / V583).